The following is a 190-amino-acid chain: Large ribosomal subunit protein uL6 (190 aa).

The protein belongs to the universal ribosomal protein uL6 family.

This chain is Large ribosomal subunit protein uL6 (RpL9), found in Drosophila melanogaster (Fruit fly).